We begin with the raw amino-acid sequence, 166 residues long: 3-isopropylmalate dehydratase small subunit 1 (166 aa).

The protein belongs to the LeuD family. LeuD type 2 subfamily. As to quaternary structure, heterodimer of LeuC and LeuD.

The catalysed reaction is (2R,3S)-3-isopropylmalate = (2S)-2-isopropylmalate. It functions in the pathway amino-acid biosynthesis; L-leucine biosynthesis; L-leucine from 3-methyl-2-oxobutanoate: step 2/4. Its function is as follows. Catalyzes the isomerization between 2-isopropylmalate and 3-isopropylmalate, via the formation of 2-isopropylmaleate. This is 3-isopropylmalate dehydratase small subunit 1 (leuD1) from Thermotoga maritima (strain ATCC 43589 / DSM 3109 / JCM 10099 / NBRC 100826 / MSB8).